The following is a 163-amino-acid chain: Putative ribose 5-phosphate isomerase (163 aa).

16–17 is a binding site for D-ribulose 5-phosphate; it reads DD. The active-site Proton acceptor is the Cys76. Residues 77-81, Asn110, Arg120, and Lys148 each bind D-ribulose 5-phosphate; that span reads GTGLG.

Belongs to the LacAB/RpiB family. Homodimer or homotetramer.

This Coccidioides immitis (strain RS) (Valley fever fungus) protein is Putative ribose 5-phosphate isomerase.